The sequence spans 1206 residues: Translocase of chloroplast 132, chloroplastic (1206 aa).

Gly-2 bears the N-acetylglycine mark. The stretch at Arg-13 to Leu-33 forms a coiled coil. Disordered stretches follow at residues Leu-33–Leu-75 and Val-97–Ser-119. Over residues Val-39–Glu-49 the composition is skewed to acidic residues. At Ser-195 the chain carries Phosphoserine. The interval Gln-233–Glu-499 is disordered. Over residues Ala-309 to Val-324 the composition is skewed to polar residues. Positions Ser-325–Ser-336 are enriched in low complexity. 3 positions are modified to phosphoserine: Ser-337, Ser-363, and Ser-398. Residues Leu-357 to Val-379 are compositionally biased toward polar residues. Residues Lys-403–Thr-427 show a composition bias toward basic and acidic residues. Residues Glu-430 to Ser-440 are compositionally biased toward low complexity. Over residues Ala-468–Thr-492 the composition is skewed to polar residues. Residues Asp-572 to Pro-801 enclose the AIG1-type G domain. Residues Gly-581–Ser-588 form a G1 region. Residues Gly-584–Ala-589 and Asp-603–Gly-608 each bind GTP. Position 588 (Ser-588) interacts with Mg(2+). A homodimerization region spans residues Asp-603–Gln-606. A G2 region spans residues Met-607 to Arg-611. The G3 stretch occupies residues Asp-628–Gly-631. Residues Arg-666–Ser-671 form a homodimerization region. The tract at residues Thr-700–Ala-703 is G4. GTP-binding positions include His-701 and Glu-749–Asn-750. The tract at residues Glu-749–His-751 is G5. The disordered stretch occupies residues Gln-824 to Leu-862. Over residues Tyr-832–Tyr-853 the composition is skewed to acidic residues. Residues Leu-1182 to Tyr-1199 form a helical membrane-spanning segment.

Belongs to the TRAFAC class TrmE-Era-EngA-EngB-Septin-like GTPase superfamily. AIG1/Toc34/Toc159-like paraseptin GTPase family. TOC159 subfamily. Homodimer. Part of the TOC core complex that includes 1 protein for the specific recognition of transit peptides surrounded by a ring composed of four proteins forming translocation channels, and four to five GTP-binding proteins providing energy. This core complex can interact with components of the TIC complex to form a larger import complex. Chloroplastic protein precursor such as prSS (precursor of the RuBisCO small subunit) interacts with these complexes. The TOC complex contains a specific subset of polar lipids such as digalactosyldiacylglyceride (DGDG), phosphatidylcholine (PC) and phosphatidylglycerol (PG). Mg(2+) is required as a cofactor. In terms of processing, phosphorylated by KOC1. In terms of tissue distribution, expressed in seedlings, leaves, flowers, and roots.

Its subcellular location is the plastid. It is found in the chloroplast outer membrane. The protein resides in the cytoplasm. In terms of biological role, GTPase involved in protein precursor import into chloroplasts. Seems to recognize chloroplast-destined precursor proteins and regulate their presentation to the translocation channel through GTP hydrolysis. Probably specialized in the import of nuclear encoded non-photosynthetic preproteins from the cytoplasm to the chloroplast. The sequence is that of Translocase of chloroplast 132, chloroplastic from Arabidopsis thaliana (Mouse-ear cress).